The sequence spans 104 residues: Small ribosomal subunit protein uS10 (104 aa).

The protein belongs to the universal ribosomal protein uS10 family. In terms of assembly, part of the 30S ribosomal subunit.

Involved in the binding of tRNA to the ribosomes. This Albidiferax ferrireducens (strain ATCC BAA-621 / DSM 15236 / T118) (Rhodoferax ferrireducens) protein is Small ribosomal subunit protein uS10.